Here is a 456-residue protein sequence, read N- to C-terminus: Short chain dehydrogenase tazN (456 aa).

NADP(+) contacts are provided by valine 45, aspartate 99, asparagine 126, arginine 160, tyrosine 195, lysine 199, and threonine 229. Catalysis depends on tyrosine 195, which acts as the Proton donor. The active-site Lowers pKa of active site Tyr is the lysine 199.

The protein belongs to the short-chain dehydrogenases/reductases (SDR) family.

The protein operates within secondary metabolite biosynthesis. Functionally, short chain dehydrogenase; part of the gene cluster that mediates the biosynthesis of azaterrilone A and other azaphilones, a class of fungal metabolites characterized by a highly oxygenated pyrano-quinone bicyclic core and exhibiting a broad range of bioactivities. The first step of the pathway begins with the non-reducing polyketide synthase tazA that assembles one acetyl-CoA starter unit, five malonyl-CoA units, and catalyzes a series of Claisen condensations, methylation, PT-mediated cyclization, and finally releases the first hexaketide precursor through the R-domain. The tazA product then undergoes reduction on its terminal ketone and the following pyran-ring formation by yet undetermined enzyme(s). Dehydration and enoyl reduction, possibly involving the trans-enoyl reductase tazE leads to the next intermediate. TazD is predicted as an acetyltransferase and might catalyze the acetylation steps leading to the synthesis of azaterrilone A. Azaterrilone A is not the final product of the taz pathway and both the highly reducing polyketide synthase tazB and the dual enzyme tazHJ catalyze late steps of the pathway, leading to the production of the 2 final stereoisomers that contain additional polyketide modification whose structures have still to be determined. The protein is Short chain dehydrogenase tazN of Aspergillus terreus (strain NIH 2624 / FGSC A1156).